The following is a 454-amino-acid chain: Histidine--tRNA ligase (454 aa).

It belongs to the class-II aminoacyl-tRNA synthetase family. As to quaternary structure, homodimer.

It is found in the cytoplasm. The catalysed reaction is tRNA(His) + L-histidine + ATP = L-histidyl-tRNA(His) + AMP + diphosphate + H(+). The chain is Histidine--tRNA ligase from Bacteroides fragilis (strain ATCC 25285 / DSM 2151 / CCUG 4856 / JCM 11019 / LMG 10263 / NCTC 9343 / Onslow / VPI 2553 / EN-2).